Here is a 461-residue protein sequence, read N- to C-terminus: Coagulation factor IX (461 aa).

The signal sequence occupies residues 1–28; it reads MQRVNMIMAESPGLITICLLGYLLSAEC. The propeptide occupies 29 to 46; that stretch reads TVFLDHENANKILNRPKR. Ca(2+)-binding residues include Tyr47, Asn48, Glu53, Glu54, Glu61, Glu63, Glu66, Glu67, Glu72, Glu73, and Glu76. Residues 47-92 form the Gla domain; the sequence is YNSGKLEEFVQGNLERECMEEKCSFEEAREVFENTERTTEFWKQYV. Glu53, Glu54, Glu61, Glu63, Glu66, Glu67, Glu72, Glu73, Glu76, Glu79, and Glu82 each carry 4-carboxyglutamate. Glu61 is a Mg(2+) binding site. A disulfide bond links Cys64 and Cys69. Position 66 (Glu66) interacts with Mg(2+). Glu72 is a binding site for Mg(2+). Glu76 serves as a coordination point for Mg(2+). Glu82 is a Ca(2+) binding site. A Mg(2+)-binding site is contributed by Glu82. An O-linked (GalNAc...) threonine glycan is attached at Thr85. Ca(2+)-binding residues include Glu86, Asp93, Gly94, and Gln96. Glu86 carries the 4-carboxyglutamate modification. Residue Glu86 coordinates Mg(2+). The EGF-like 1; calcium-binding domain occupies 93-129; it reads DGDQCESNPCLNGGSCKDDINSYECWCPFGFEGKNCE. Cystine bridges form between Cys97–Cys108, Cys102–Cys117, Cys119–Cys128, Cys134–Cys145, Cys141–Cys155, Cys157–Cys170, Cys178–Cys335, Cys252–Cys268, Cys382–Cys396, and Cys407–Cys435. Ser99 carries an O-linked (Glc...) serine glycan. Ser107 is a glycosylation site (O-linked (Fuc...) serine). The Ca(2+) site is built by Asp110 and Asp111. At Asp110 the chain carries (3R)-3-hydroxyaspartate. Residue Ser114 is modified to Phosphoserine. The region spanning 130 to 171 is the EGF-like 2 domain; it reads LDVTCNIKNGRCEQFCKNSADNKVVCSCTEGYRLAENQKSCE. Residues 192–226 constitute a propeptide, activation peptide; sequence AETVFPDVDYVNSTEAETILDNITQSTQSFNDFTR. Residue Tyr201 is modified to Sulfotyrosine. Asn203 carries N-linked (GlcNAc...) asparagine glycosylation. Ser204 carries the phosphoserine modification. At Thr205 the chain carries Phosphothreonine; alternate. Thr205 carries O-linked (GalNAc...) threonine; alternate glycosylation. Asn213 carries N-linked (GlcNAc...) asparagine glycosylation. Thr215 and Thr225 each carry an O-linked (GalNAc...) threonine glycan. The region spanning 227–459 is the Peptidase S1 domain; the sequence is VVGGEDAKPG…YVNWIKEKTK (233 aa). His267 acts as the Charge relay system in catalysis. Ca(2+)-binding residues include Glu281, Asn283, Glu286, Glu288, and Glu291. The active-site Charge relay system is the Asp315. Residue Ser411 is the Charge relay system of the active site.

This sequence belongs to the peptidase S1 family. In terms of assembly, heterodimer of a light chain and a heavy chain; disulfide-linked. Interacts (inactive and activated) with F11 (activated) in calcium-dependent manner. Interacts with SERPINC1. Interacts (activated) with iripin-8, a serine protease inhibitor from Ixodes ricinus saliva. Interacts (inactive and activated) with nitrophorin-2, an anticoagulant protein from Rhodnius prolixus. Post-translationally, activated by factor XIa, which excises the activation peptide. The propeptide can also be removed by snake venom protease. Activated by coagulation factor VIIa-tissue factor (F7-F3) complex in calcium-dependent manner. In terms of processing, the iron and 2-oxoglutarate dependent 3-hydroxylation of aspartate and asparagine is (R) stereospecific within EGF domains. In terms of tissue distribution, detected in blood plasma (at protein level). Synthesized primarily in the liver and secreted in plasma.

It localises to the secreted. The catalysed reaction is Selective cleavage of Arg-|-Ile bond in factor X to form factor Xa.. Functionally, factor IX is a vitamin K-dependent plasma protein that participates in the intrinsic pathway of blood coagulation by converting factor X to its active form in the presence of Ca(2+) ions, phospholipids, and factor VIIIa. The protein is Coagulation factor IX (F9) of Homo sapiens (Human).